A 476-amino-acid chain; its full sequence is Proline--tRNA ligase (476 aa).

The protein belongs to the class-II aminoacyl-tRNA synthetase family. ProS type 3 subfamily. Homodimer.

It is found in the cytoplasm. The enzyme catalyses tRNA(Pro) + L-proline + ATP = L-prolyl-tRNA(Pro) + AMP + diphosphate. Its function is as follows. Catalyzes the attachment of proline to tRNA(Pro) in a two-step reaction: proline is first activated by ATP to form Pro-AMP and then transferred to the acceptor end of tRNA(Pro). This is Proline--tRNA ligase from Rubrobacter xylanophilus (strain DSM 9941 / JCM 11954 / NBRC 16129 / PRD-1).